The following is a 252-amino-acid chain: Imidazole glycerol phosphate synthase subunit HisF (252 aa).

Residues Asp-11 and Asp-130 contribute to the active site.

It belongs to the HisA/HisF family. In terms of assembly, heterodimer of HisH and HisF.

The protein resides in the cytoplasm. It carries out the reaction 5-[(5-phospho-1-deoxy-D-ribulos-1-ylimino)methylamino]-1-(5-phospho-beta-D-ribosyl)imidazole-4-carboxamide + L-glutamine = D-erythro-1-(imidazol-4-yl)glycerol 3-phosphate + 5-amino-1-(5-phospho-beta-D-ribosyl)imidazole-4-carboxamide + L-glutamate + H(+). It functions in the pathway amino-acid biosynthesis; L-histidine biosynthesis; L-histidine from 5-phospho-alpha-D-ribose 1-diphosphate: step 5/9. Its function is as follows. IGPS catalyzes the conversion of PRFAR and glutamine to IGP, AICAR and glutamate. The HisF subunit catalyzes the cyclization activity that produces IGP and AICAR from PRFAR using the ammonia provided by the HisH subunit. This chain is Imidazole glycerol phosphate synthase subunit HisF, found in Bacillus cereus (strain AH187).